The following is a 248-amino-acid chain: NLP effector protein Pc121494 (248 aa).

Residues 1 to 19 (MKFIAVLIAAIASLSAVQA) form the signal peptide. The Hepta-peptide GHRHDWE motif motif lies at 124 to 130 (GHRNGWE). Residue Asn-143 is glycosylated (N-linked (GlcNAc...) asparagine).

Belongs to the Necrosis inducing protein (NPP1) family.

It localises to the secreted. Secreted effector that contributes strongly to virulence during infection by P.capsici. The sequence is that of NLP effector protein Pc121494 from Phytophthora capsici.